The following is a 503-amino-acid chain: Aromatase (503 aa).

Cys-437 lines the heme pocket.

Belongs to the cytochrome P450 family. Heme is required as a cofactor.

Its subcellular location is the membrane. It carries out the reaction testosterone + 3 reduced [NADPH--hemoprotein reductase] + 3 O2 = 17beta-estradiol + formate + 3 oxidized [NADPH--hemoprotein reductase] + 4 H2O + 4 H(+). It catalyses the reaction androst-4-ene-3,17-dione + 3 reduced [NADPH--hemoprotein reductase] + 3 O2 = estrone + formate + 3 oxidized [NADPH--hemoprotein reductase] + 4 H2O + 4 H(+). Catalyzes the formation of aromatic C18 estrogens from C19 androgens. This is Aromatase (CYP19A1) from Oryctolagus cuniculus (Rabbit).